A 687-amino-acid chain; its full sequence is Glycine--tRNA ligase beta subunit (687 aa).

This sequence belongs to the class-II aminoacyl-tRNA synthetase family. In terms of assembly, tetramer of two alpha and two beta subunits.

It is found in the cytoplasm. The enzyme catalyses tRNA(Gly) + glycine + ATP = glycyl-tRNA(Gly) + AMP + diphosphate. The protein is Glycine--tRNA ligase beta subunit of Geobacter sulfurreducens (strain ATCC 51573 / DSM 12127 / PCA).